Reading from the N-terminus, the 284-residue chain is Bifunctional protein FolD (284 aa).

Residues 166-168, serine 191, and isoleucine 232 contribute to the NADP(+) site; that span reads GAS.

It belongs to the tetrahydrofolate dehydrogenase/cyclohydrolase family. As to quaternary structure, homodimer.

It carries out the reaction (6R)-5,10-methylene-5,6,7,8-tetrahydrofolate + NADP(+) = (6R)-5,10-methenyltetrahydrofolate + NADPH. The catalysed reaction is (6R)-5,10-methenyltetrahydrofolate + H2O = (6R)-10-formyltetrahydrofolate + H(+). It functions in the pathway one-carbon metabolism; tetrahydrofolate interconversion. Catalyzes the oxidation of 5,10-methylenetetrahydrofolate to 5,10-methenyltetrahydrofolate and then the hydrolysis of 5,10-methenyltetrahydrofolate to 10-formyltetrahydrofolate. The polypeptide is Bifunctional protein FolD (Neisseria meningitidis serogroup B (strain ATCC BAA-335 / MC58)).